The primary structure comprises 230 residues: Ribonuclease 3 (230 aa).

An RNase III domain is found at 5–125 (YSRFYNILGY…VIGAIYLDSD (121 aa)). Glutamate 40 lines the Mg(2+) pocket. Aspartate 44 is an active-site residue. Mg(2+) contacts are provided by aspartate 111 and glutamate 114. Glutamate 114 is an active-site residue. Residues 153-223 (DSKSKLQEIL…AEKMIEMLSQ (71 aa)) form the DRBM domain.

The protein belongs to the ribonuclease III family. In terms of assembly, homodimer. Mg(2+) is required as a cofactor.

Its subcellular location is the cytoplasm. It catalyses the reaction Endonucleolytic cleavage to 5'-phosphomonoester.. Functionally, digests double-stranded RNA. Involved in the processing of primary rRNA transcript to yield the immediate precursors to the large and small rRNAs (23S and 16S). Processes some mRNAs, and tRNAs when they are encoded in the rRNA operon. Processes pre-crRNA and tracrRNA of type II CRISPR loci if present in the organism. The protein is Ribonuclease 3 of Francisella tularensis subsp. holarctica (strain OSU18).